The chain runs to 1435 residues: Dicer-like protein 2 (1435 aa).

The region spanning 54–234 is the Helicase ATP-binding domain; sequence MLSESLRQNI…LEVLEINLNA (181 aa). 67–74 provides a ligand contact to ATP; it reads MDTGSGKT. Positions 175-178 match the DEAH box motif; that stretch reads DEAH. One can recognise a Helicase C-terminal domain in the interval 400 to 564; sequence KLIDFLVLEH…ENKRALEHIQ (165 aa). In terms of domain architecture, Dicer dsRNA-binding fold spans 591-684; it reads ARNHLSHFCG…MPAHHHIDDE (94 aa). RNase III domains lie at 956 to 1099 and 1141 to 1323; these read ANEL…IDGG and LSEI…IDSQ. Positions 1178, 1309, and 1312 each coordinate Mg(2+).

The protein belongs to the helicase family. Dicer subfamily. The cofactor is Mg(2+). Mn(2+) is required as a cofactor.

Functionally, dicer-like endonuclease involved in cleaving double-stranded RNA in the RNA interference (RNAi) pathway. Produces 21 to 25 bp dsRNAs (siRNAs) which target the selective destruction of homologous RNAs leading to sequence-specific suppression of gene expression, called post-transcriptional gene silencing (PTGS). Part of a broad host defense response against viral infection and transposons. This Coccidioides immitis (strain RS) (Valley fever fungus) protein is Dicer-like protein 2 (DCL2).